A 257-amino-acid polypeptide reads, in one-letter code: uncharacterized protein (257 aa).

Disordered regions lie at residues 86-119 and 182-206; these read SDEE…RPLS and STPL…TDGQ. Positions 196 to 206 are enriched in polar residues; it reads PTPTSQLTDGQ.

This is an uncharacterized protein from Invertebrate iridescent virus 3 (IIV-3).